Consider the following 376-residue polypeptide: Queuine tRNA-ribosyltransferase (376 aa).

Asp-93 serves as the catalytic Proton acceptor. Residues 93–97 (DSGGF), Asp-147, Gln-190, and Gly-217 contribute to the substrate site. Residues 248-254 (GVGTPDD) form an RNA binding region. Asp-267 (nucleophile) is an active-site residue. Residues 272–276 (TRSGR) are RNA binding; important for wobble base 34 recognition.

Belongs to the queuine tRNA-ribosyltransferase family. In terms of assembly, homodimer. Within each dimer, one monomer is responsible for RNA recognition and catalysis, while the other monomer binds to the replacement base PreQ1.

It carries out the reaction 7-aminomethyl-7-carbaguanine + guanosine(34) in tRNA = 7-aminomethyl-7-carbaguanosine(34) in tRNA + guanine. It participates in tRNA modification; tRNA-queuosine biosynthesis. Catalyzes the base-exchange of a guanine (G) residue with the queuine precursor 7-aminomethyl-7-deazaguanine (PreQ1) at position 34 (anticodon wobble position) in tRNAs with GU(N) anticodons (tRNA-Asp, -Asn, -His and -Tyr). Catalysis occurs through a double-displacement mechanism. The nucleophile active site attacks the C1' of nucleotide 34 to detach the guanine base from the RNA, forming a covalent enzyme-RNA intermediate. The proton acceptor active site deprotonates the incoming PreQ1, allowing a nucleophilic attack on the C1' of the ribose to form the product. After dissociation, two additional enzymatic reactions on the tRNA convert PreQ1 to queuine (Q), resulting in the hypermodified nucleoside queuosine (7-(((4,5-cis-dihydroxy-2-cyclopenten-1-yl)amino)methyl)-7-deazaguanosine). The polypeptide is Queuine tRNA-ribosyltransferase (Agrobacterium fabrum (strain C58 / ATCC 33970) (Agrobacterium tumefaciens (strain C58))).